A 553-amino-acid chain; its full sequence is Glucose-6-phosphate isomerase (553 aa).

E355 serves as the catalytic Proton donor. Residues H386 and K513 contribute to the active site.

This sequence belongs to the GPI family.

The protein resides in the cytoplasm. The catalysed reaction is alpha-D-glucose 6-phosphate = beta-D-fructose 6-phosphate. It participates in carbohydrate biosynthesis; gluconeogenesis. The protein operates within carbohydrate degradation; glycolysis; D-glyceraldehyde 3-phosphate and glycerone phosphate from D-glucose: step 2/4. Functionally, catalyzes the reversible isomerization of glucose-6-phosphate to fructose-6-phosphate. This Baumannia cicadellinicola subsp. Homalodisca coagulata protein is Glucose-6-phosphate isomerase.